A 596-amino-acid polypeptide reads, in one-letter code: Arginine--tRNA ligase (596 aa).

The 'HIGH' region motif lies at 128 to 138 (ANPTSSLHVGH).

It belongs to the class-I aminoacyl-tRNA synthetase family. Monomer.

The protein localises to the cytoplasm. The enzyme catalyses tRNA(Arg) + L-arginine + ATP = L-arginyl-tRNA(Arg) + AMP + diphosphate. This Acinetobacter baumannii (strain AB307-0294) protein is Arginine--tRNA ligase.